A 375-amino-acid chain; its full sequence is Sulfite efflux pump SSU1 (375 aa).

Topologically, residues 1 to 25 are cytoplasmic; the sequence is MPSGSGFHNIEEAGEKARKRDDWIA. The chain crosses the membrane as a helical span at residues 26-46; the sequence is ISNFHPGWFSVNMGTGITAIL. Residues 47–59 are Extracellular-facing; the sequence is LQNLPYQFPGLHY. A helical transmembrane segment spans residues 60–80; that stretch reads IAVVLFILNVIIFFLFLTISI. Residues 81-101 lie on the Cytoplasmic side of the membrane; it reads TRYCLWPDKFKAMLAHPAHSM. Residues 102–122 traverse the membrane as a helical segment; that stretch reads LLGTFPMGFATIINCIVFICV. Over 123–135 the chain is Extracellular; that stretch reads PVWGEWASRFAWG. The helical transmembrane segment at 136-156 threads the bilayer; the sequence is LWWIDAAVSVAICYFVPFMLM. At 157–167 the chain is on the cytoplasmic side; it reads TKHTSSLETMT. A helical membrane pass occupies residues 168-188; sequence AAWLLPIVAPVVAAASGGVVA. At 189–200 the chain is on the extracellular side; that stretch reads DSLQNDTHALIT. Residue Asn193 is glycosylated (N-linked (GlcNAc...) asparagine). Residues 201 to 221 form a helical membrane-spanning segment; the sequence is ILVCYAMWGSAVPLAMVILVI. The Cytoplasmic portion of the chain corresponds to 222-234; that stretch reads YFQRLAIHKLVPR. The chain crosses the membrane as a helical span at residues 235-255; the sequence is AAIVSALLPIGPLGQGGFGLM. Residues 256 to 277 are Extracellular-facing; sequence QLGVVAKRVFPRLDFLAPIAGD. A helical transmembrane segment spans residues 278–298; that stretch reads IFYVMGAFIAMIMWGFGLIWL. Topologically, residues 299 to 309 are cytoplasmic; sequence WFALASFTRGK. Residues 310-330 form a helical membrane-spanning segment; the sequence is FYFNIGWWAFTFPLGVFTTAT. Topologically, residues 331-343 are extracellular; sequence TQMGKEFNSPFFD. A helical transmembrane segment spans residues 344–364; the sequence is ILGTFFSIVVTCMWVLVFALT. At 365-375 the chain is on the cytoplasmic side; the sequence is VYKSCTKELFR.

The protein belongs to the tellurite-resistance/dicarboxylate transporter (TDT) family.

The protein resides in the cell membrane. Sulphite efflux pump required for the secretion of sulphite as a reducing agent. In the presence of sulphite, cystine in keratin is directly cleaved to cysteine and S-sulphocysteine, and thereby, reduced proteins become accessible to hydrolysis by a variety of secreted endo- and exoproteases. Excretion of sulphite mediated by an efflux pump also represents a detoxification pathway for dermatophytes during infection of the epidermal stratum corneum, hair and nails, which are rich in cysteine. This chain is Sulfite efflux pump SSU1 (SSU1), found in Trichophyton rubrum (Athlete's foot fungus).